The sequence spans 331 residues: Putative type II secretion system C-type protein YghF (331 aa).

Residues 44-60 form a helical membrane-spanning segment; the sequence is MFWLMLLIISAKMAHSL.

This sequence belongs to the GSP C family.

Its subcellular location is the cell inner membrane. Functionally, involved in a type II secretion system (T2SS, formerly general secretion pathway, GSP) for the export of folded proteins across the outer membrane. This Escherichia coli (strain K12) protein is Putative type II secretion system C-type protein YghF.